A 388-amino-acid polypeptide reads, in one-letter code: Probable serine/threonine-protein kinase PBL20 (388 aa).

Residue C3 is the site of S-palmitoyl cysteine attachment. The Protein kinase domain occupies 91-372 (FSRKLKIGEG…FVVESLTNII (282 aa)). Residues 97–105 (IGEGGFGSV) and K128 contribute to the ATP site. Catalysis depends on D221, which acts as the Proton acceptor.

It belongs to the protein kinase superfamily. Ser/Thr protein kinase family.

The protein localises to the cell membrane. It carries out the reaction L-seryl-[protein] + ATP = O-phospho-L-seryl-[protein] + ADP + H(+). It catalyses the reaction L-threonyl-[protein] + ATP = O-phospho-L-threonyl-[protein] + ADP + H(+). In terms of biological role, may be involved in plant defense signaling. The sequence is that of Probable serine/threonine-protein kinase PBL20 from Arabidopsis thaliana (Mouse-ear cress).